The sequence spans 1308 residues: Receptor tyrosine-protein kinase erbB-4 (1308 aa).

The first 25 residues, 1–25, serve as a signal peptide directing secretion; sequence MKPATGLWVWVSLLVAAGTVQPSDS. The Extracellular segment spans residues 26–651; the sequence is QSVCAGTENK…STLPQHARTP (626 aa). Cys-29 and Cys-56 form a disulfide bridge. Residues Asn-138, Asn-174, and Asn-181 are each glycosylated (N-linked (GlcNAc...) asparagine). 12 cysteine pairs are disulfide-bonded: Cys-156–Cys-186, Cys-189–Cys-197, Cys-193–Cys-205, Cys-213–Cys-221, Cys-217–Cys-229, Cys-230–Cys-238, Cys-234–Cys-246, Cys-249–Cys-258, Cys-262–Cys-289, Cys-293–Cys-304, Cys-308–Cys-323, and Cys-326–Cys-330. Asn-253 is a glycosylation site (N-linked (GlcNAc...) asparagine). Residues Asn-358, Asn-410, Asn-473, and Asn-495 are each glycosylated (N-linked (GlcNAc...) asparagine). 10 disulfide bridges follow: Cys-503/Cys-512, Cys-507/Cys-520, Cys-523/Cys-532, Cys-536/Cys-552, Cys-555/Cys-569, Cys-559/Cys-577, Cys-580/Cys-589, Cys-593/Cys-614, Cys-617/Cys-625, and Cys-621/Cys-633. A glycan (N-linked (GlcNAc...) asparagine) is linked at Asn-548. Asn-576 carries an N-linked (GlcNAc...) asparagine glycan. Residue Asn-620 is glycosylated (N-linked (GlcNAc...) asparagine). Residues 652–675 traverse the membrane as a helical segment; that stretch reads LIAAGVIGGLFILVIVGLTFAVYV. The Nuclear localization signal signature appears at 676-684; sequence RRKSIKKKR. The Cytoplasmic portion of the chain corresponds to 676–1308; sequence RRKSIKKKRA…PPYRHRNTVV (633 aa). In terms of domain architecture, Protein kinase spans 718–985; the sequence is LKRVKVLGSG…RMARDPQRYL (268 aa). Residues 724–732, Lys-751, 797–799, and 843–848 contribute to the ATP site; these read LGSGAFGTV, QLM, and DLAARN. Residue Asp-843 is the Proton acceptor of the active site. Phosphotyrosine; by autocatalysis occurs at positions 875, 1035, 1056, 1150, 1162, 1188, 1202, 1242, 1258, and 1284. Short sequence motifs (PPxY motif) lie at residues 1032–1035 and 1053–1056; these read PPIY and PPAY. The disordered stretch occupies residues 1117 to 1150; it reads PHVQEDSSTQRYSADPTVFAPERSPRGELDEEGY. The PPxY motif 3 motif lies at 1298–1301; the sequence is PPPY. A PDZ-binding motif is present at residues 1306–1308; sequence TVV.

This sequence belongs to the protein kinase superfamily. Tyr protein kinase family. EGF receptor subfamily. Monomer in the absence of bound ligand. Homodimer or heterodimer with another ERBB family member upon ligand binding, thus forming heterotetramers. Interacts with EGFR and ERBB2. Interacts with CBFA2T3. Interacts with DLG2 (via its PDZ domain), DLG3 (via its PDZ domain), DLG4 (via its PDZ domain) and SNTB2 (via its PDZ domain). Interacts with MUC1. Interacts (via its PPxy motifs) with WWOX. Interacts (via the PPxY motif 3 of isoform JM-A CYT-2) with YAP1 (via the WW domain 1 of isoform 1). Interacts (isoform JM-A CYT-1 and isoform JM-B CYT-1) with WWP1. Interacts (via its intracellular domain) with TRIM28. Interacts (via the intracellular domains of both CYT-1 and CYT-2 isoforms) with KAP1; the interaction does not phosphorylate KAP1 but represses ERBB4-mediated transcriptional activity. Interacts with PRPU, DDX23, MATR3, RBM15, ILF3, KAP1, U5S1, U2SURP, ITCH, HNRNPU, AP2A1, NULC, LEO1, WWP2, IGHG1, HXK1, GRB7 and SRRT. Interacts (phosphorylated isoform JM-A CYT-1 and isoform JM-B CYT-1) with PIK3R1. Interacts with SHC1. Interacts with GRB2. Interacts (soluble intracellular domain) with STAT5A. Interacts (soluble intracellular domain) with BCL2. Interacts (phosphorylated) with STAT1. In terms of processing, isoform JM-A CYT-1 and isoform JM-A CYT-2 are processed by ADAM17. Proteolytic processing in response to ligand or 12-O-tetradecanoylphorbol-13-acetate stimulation results in the production of 120 kDa soluble receptor forms and intermediate membrane-anchored 80 kDa fragments (m80HER4), which are further processed by a presenilin-dependent gamma-secretase to release a cytoplasmic intracellular domain (E4ICD; E4ICD1/s80Cyt1 or E4ICD2/s80Cyt2, depending on the isoform). Membrane-anchored 80 kDa fragments of the processed isoform JM-A CYT-1 are more readily degraded by the proteasome than fragments of isoform JM-A CYT-2, suggesting a prevalence of E4ICD2 over E4ICD1. Isoform JM-B CYT-1 and isoform JM-B CYT-2 lack the ADAM17 cleavage site and are not processed by ADAM17, precluding further processing by gamma-secretase. Autophosphorylated on tyrosine residues in response to ligand binding. Autophosphorylation occurs in trans, i.e. one subunit of the dimeric receptor phosphorylates tyrosine residues on the other subunit. Ligands trigger phosphorylation at specific tyrosine residues, thereby creating binding sites for scaffold proteins and effectors. Constitutively phosphorylated at a basal level when overexpressed in heterologous systems; ligand binding leads to increased phosphorylation. Phosphorylation at Tyr-1035 is important for interaction with STAT1. Phosphorylation at Tyr-1056 is important for interaction with PIK3R1. Phosphorylation at Tyr-1242 is important for interaction with SHC1. Phosphorylation at Tyr-1188 may also contribute to the interaction with SHC1. Isoform JM-A CYT-2 is constitutively phosphorylated on tyrosine residues in a ligand-independent manner. E4ICD2 but not E4ICD1 is phosphorylated on tyrosine residues. Post-translationally, ubiquitinated. During mitosis, the ERBB4 intracellular domain is ubiquitinated by the APC/C complex and targeted to proteasomal degradation. Isoform JM-A CYT-1 and isoform JM-B CYT-1 are ubiquitinated by WWP1. The ERBB4 intracellular domain (E4ICD1) is ubiquitinated, and this involves NEDD4. Expressed at highest levels in brain, heart, kidney, in addition to skeletal muscle, parathyroid, cerebellum, pituitary, spleen, testis and breast. Lower levels in thymus, lung, salivary gland, and pancreas. Isoform JM-A CYT-1 and isoform JM-B CYT-1 are expressed in cerebellum, but only the isoform JM-B is expressed in the heart.

The protein localises to the cell membrane. The protein resides in the nucleus. It is found in the mitochondrion. The enzyme catalyses L-tyrosyl-[protein] + ATP = O-phospho-L-tyrosyl-[protein] + ADP + H(+). With respect to regulation, binding of a cognate ligand leads to dimerization and activation by autophosphorylation on tyrosine residues. In vitro kinase activity is increased by Mg(2+). Inhibited by PD153035, lapatinib, gefitinib (iressa, ZD1839), AG1478 and BIBX1382BS. Its function is as follows. Tyrosine-protein kinase that plays an essential role as cell surface receptor for neuregulins and EGF family members and regulates development of the heart, the central nervous system and the mammary gland, gene transcription, cell proliferation, differentiation, migration and apoptosis. Required for normal cardiac muscle differentiation during embryonic development, and for postnatal cardiomyocyte proliferation. Required for normal development of the embryonic central nervous system, especially for normal neural crest cell migration and normal axon guidance. Required for mammary gland differentiation, induction of milk proteins and lactation. Acts as cell-surface receptor for the neuregulins NRG1, NRG2, NRG3 and NRG4 and the EGF family members BTC, EREG and HBEGF. Ligand binding triggers receptor dimerization and autophosphorylation at specific tyrosine residues that then serve as binding sites for scaffold proteins and effectors. Ligand specificity and signaling is modulated by alternative splicing, proteolytic processing, and by the formation of heterodimers with other ERBB family members, thereby creating multiple combinations of intracellular phosphotyrosines that trigger ligand- and context-specific cellular responses. Mediates phosphorylation of SHC1 and activation of the MAP kinases MAPK1/ERK2 and MAPK3/ERK1. Isoform JM-A CYT-1 and isoform JM-B CYT-1 phosphorylate PIK3R1, leading to the activation of phosphatidylinositol 3-kinase and AKT1 and protect cells against apoptosis. Isoform JM-A CYT-1 and isoform JM-B CYT-1 mediate reorganization of the actin cytoskeleton and promote cell migration in response to NRG1. Isoform JM-A CYT-2 and isoform JM-B CYT-2 lack the phosphotyrosine that mediates interaction with PIK3R1, and hence do not phosphorylate PIK3R1, do not protect cells against apoptosis, and do not promote reorganization of the actin cytoskeleton and cell migration. Proteolytic processing of isoform JM-A CYT-1 and isoform JM-A CYT-2 gives rise to the corresponding soluble intracellular domains (4ICD) that translocate to the nucleus, promote nuclear import of STAT5A, activation of STAT5A, mammary epithelium differentiation, cell proliferation and activation of gene expression. The ERBB4 soluble intracellular domains (4ICD) colocalize with STAT5A at the CSN2 promoter to regulate transcription of milk proteins during lactation. The ERBB4 soluble intracellular domains can also translocate to mitochondria and promote apoptosis. The polypeptide is Receptor tyrosine-protein kinase erbB-4 (ERBB4) (Homo sapiens (Human)).